The following is a 255-amino-acid chain: Indole-3-glycerol phosphate synthase (255 aa).

This sequence belongs to the TrpC family.

It carries out the reaction 1-(2-carboxyphenylamino)-1-deoxy-D-ribulose 5-phosphate + H(+) = (1S,2R)-1-C-(indol-3-yl)glycerol 3-phosphate + CO2 + H2O. It functions in the pathway amino-acid biosynthesis; L-tryptophan biosynthesis; L-tryptophan from chorismate: step 4/5. In Streptococcus pneumoniae serotype 19F (strain G54), this protein is Indole-3-glycerol phosphate synthase.